We begin with the raw amino-acid sequence, 407 residues long: GTPase Obg (407 aa).

The region spanning 1–159 is the Obg domain; that stretch reads MKFVDEVSIR…RDLKMEMKVL (159 aa). The segment at 127-150 is disordered; sequence NTRFKSSTNRAPRQTTPGKPGDQR. Over residues 129–143 the composition is skewed to polar residues; the sequence is RFKSSTNRAPRQTTP. Residues 160–333 enclose the OBG-type G domain; sequence ADVGLLGLPN…LSHDLMRYLE (174 aa). Residues 166–173, 191–195, 213–216, 283–286, and 314–316 each bind GTP; these read GLPNAGKS, FTTLV, DIPG, NKAD, and SAI. Mg(2+)-binding residues include S173 and T193. The tract at residues 378–407 is disordered; sequence VKSVHDIGDDDDWDDFEDDEDGPEIIYVRD. A compositionally biased stretch (acidic residues) spans 385–400; it reads GDDDDWDDFEDDEDGP.

The protein belongs to the TRAFAC class OBG-HflX-like GTPase superfamily. OBG GTPase family. Monomer. The cofactor is Mg(2+).

Its subcellular location is the cytoplasm. Functionally, an essential GTPase which binds GTP, GDP and possibly (p)ppGpp with moderate affinity, with high nucleotide exchange rates and a fairly low GTP hydrolysis rate. Plays a role in control of the cell cycle, stress response, ribosome biogenesis and in those bacteria that undergo differentiation, in morphogenesis control. The chain is GTPase Obg from Pseudomonas entomophila (strain L48).